We begin with the raw amino-acid sequence, 150 residues long: Flagellar assembly factor FliW (150 aa).

This sequence belongs to the FliW family. Interacts with translational regulator CsrA and flagellin(s).

The protein localises to the cytoplasm. Acts as an anti-CsrA protein, binds CsrA and prevents it from repressing translation of its target genes, one of which is flagellin. Binds to flagellin and participates in the assembly of the flagellum. The sequence is that of Flagellar assembly factor FliW from Thermoanaerobacter pseudethanolicus (strain ATCC 33223 / 39E) (Clostridium thermohydrosulfuricum).